The chain runs to 149 residues: Transcriptional repressor NrdR (149 aa).

A zinc finger lies at 3-34 (CPFCSATDTKVIDSRLVADGHQVRRRRECVQC). In terms of domain architecture, ATP-cone spans 49–139 (PRVVKQDGSR…VYRAFEDVSE (91 aa)).

This sequence belongs to the NrdR family. It depends on Zn(2+) as a cofactor.

Functionally, negatively regulates transcription of bacterial ribonucleotide reductase nrd genes and operons by binding to NrdR-boxes. This chain is Transcriptional repressor NrdR, found in Shewanella halifaxensis (strain HAW-EB4).